Here is a 1295-residue protein sequence, read N- to C-terminus: Phosphoribosylformylglycinamidine synthase (1295 aa).

A disordered region spans residues 305–327; sequence WPGAATGSGGEIRDEGATGRGAK. ATP contacts are provided by residues 307 to 318, 386 to 388, and Ala-678; these read GAATGSGGEIRD and TGY. 4 residues coordinate Mg(2+): Asp-679, Glu-718, Asn-722, and Asp-884. Ser-886 provides a ligand contact to ATP. The Glutamine amidotransferase type-1 domain occupies 1042–1295; that stretch reads VAVLREQGVN…IFRNARKQLG (254 aa). Residue Cys-1135 is the Nucleophile of the active site. Residues His-1260 and Glu-1262 contribute to the active site.

In the N-terminal section; belongs to the FGAMS family. Monomer.

The protein resides in the cytoplasm. The catalysed reaction is N(2)-formyl-N(1)-(5-phospho-beta-D-ribosyl)glycinamide + L-glutamine + ATP + H2O = 2-formamido-N(1)-(5-O-phospho-beta-D-ribosyl)acetamidine + L-glutamate + ADP + phosphate + H(+). It participates in purine metabolism; IMP biosynthesis via de novo pathway; 5-amino-1-(5-phospho-D-ribosyl)imidazole from N(2)-formyl-N(1)-(5-phospho-D-ribosyl)glycinamide: step 1/2. Its function is as follows. Phosphoribosylformylglycinamidine synthase involved in the purines biosynthetic pathway. Catalyzes the ATP-dependent conversion of formylglycinamide ribonucleotide (FGAR) and glutamine to yield formylglycinamidine ribonucleotide (FGAM) and glutamate. The chain is Phosphoribosylformylglycinamidine synthase from Salmonella typhimurium (strain LT2 / SGSC1412 / ATCC 700720).